A 377-amino-acid polypeptide reads, in one-letter code: Ejaculatory bulb-specific protein 1 (377 aa).

An N-terminal signal peptide occupies residues M1 to A20. Positions P155 to G253 are disordered. The segment covering G165 to P228 has biased composition (pro residues).

In terms of tissue distribution, specifically expressed in the ejaculatory bulb and seminal fluid. Detected in mated females 3 minutes after the start of mating, and for at least 3 hours after the start of mating.

Its subcellular location is the secreted. In terms of biological role, major protein component of the posterior mating plug. Accessory gland proteins constitute, or are required for formation of the anterior mating plug. Posterior mating plug forms before sperm transfer and the anterior mating plug is formed after the start of mating. The chain is Ejaculatory bulb-specific protein 1 from Drosophila melanogaster (Fruit fly).